The primary structure comprises 582 residues: Isopropyl malate synthase AMT7 (582 aa).

One can recognise a Pyruvate carboxyltransferase domain in the interval 61-341 (PVLFSTDLRD…EPGIDLSRLD (281 aa)).

The protein belongs to the alpha-IPM synthase/homocitrate synthase family. LeuA type 2 subfamily.

It catalyses the reaction 3-methyl-2-oxobutanoate + acetyl-CoA + H2O = (2S)-2-isopropylmalate + CoA + H(+). Its pathway is mycotoxin biosynthesis. Functionally, isopropyl malate synthase; part of the gene clusters that mediate the biosynthesis of AM-toxins, host-selective toxins (HSTs) causing Alternaria blotch on apple, a worldwide distributed disease. AM-toxins are cyclic depsipeptides containing the 3 residues 2-hydroxy-isovaleric acid (2-HIV), dehydroalanine, L-alanine which are common for all 3 AM-toxins I to III. The fourth precursor is L-alpha-amino-methoxyphenyl-valeric acid (L-Amv) for AM-toxin I, L-alpha-amino-phenyl-valeric acid (L-Apv) for AM-toxin II, and L-alpha-amino-hydroxyphenyl-valeric acid (L-Ahv) for AM-toxin III. AM-toxins have two target sites for affecting susceptible apple cells; they cause invagination of the plasma membrane and electrolyte loss and chloroplast disorganization. The non-ribosomal peptide synthetase AMT1 contains 4 catalytic modules and is responsible for activation of each residue in AM-toxin. The aldo-keto reductase AMT2 catalyzes the conversion of 2-keto-isovaleric acid (2-KIV) to 2-hydroxy-isovaleric acid (2-HIV), one of the precursor residues incorporated by AMT1 during AM-toxin biosynthesis, by reduction of its ketone to an alcohol. The cytochrome P450 monooxygenase AMT3 and the thioesterase AMT4 are also important for AM-toxin production, but their exact function within the AM-toxin biosynthesis are not known yet. Up to 21 proteins (including AMT1 to AMT4) are predicted to be involved in AM-toxin biosynthesis since their expression ishighly up-regulated in AM-toxin-producing cultures. The sequence is that of Isopropyl malate synthase AMT7 from Alternaria alternata (Alternaria rot fungus).